We begin with the raw amino-acid sequence, 471 residues long: Ribulose bisphosphate carboxylase large chain (471 aa).

Lys5 bears the N6,N6,N6-trimethyllysine mark. Substrate is bound by residues Asn114 and Thr164. Lys166 acts as the Proton acceptor in catalysis. Substrate is bound at residue Lys168. Residues Lys192, Asp194, and Glu195 each coordinate Mg(2+). Lys192 carries the N6-carboxylysine modification. His285 (proton acceptor) is an active-site residue. The substrate site is built by Arg286, His318, and Ser370.

The protein belongs to the RuBisCO large chain family. Type I subfamily. Heterohexadecamer of 8 large chains and 8 small chains; disulfide-linked. The disulfide link is formed within the large subunit homodimers. Mg(2+) serves as cofactor. Post-translationally, the disulfide bond which can form in the large chain dimeric partners within the hexadecamer appears to be associated with oxidative stress and protein turnover.

It localises to the plastid. Its subcellular location is the chloroplast. The catalysed reaction is 2 (2R)-3-phosphoglycerate + 2 H(+) = D-ribulose 1,5-bisphosphate + CO2 + H2O. It carries out the reaction D-ribulose 1,5-bisphosphate + O2 = 2-phosphoglycolate + (2R)-3-phosphoglycerate + 2 H(+). In terms of biological role, ruBisCO catalyzes two reactions: the carboxylation of D-ribulose 1,5-bisphosphate, the primary event in carbon dioxide fixation, as well as the oxidative fragmentation of the pentose substrate in the photorespiration process. Both reactions occur simultaneously and in competition at the same active site. The polypeptide is Ribulose bisphosphate carboxylase large chain (Schlumbergera truncata (Thanksgiving cactus)).